The following is a 284-amino-acid chain: RNase adapter protein RapZ (284 aa).

8 to 15 (GRSGSGKS) provides a ligand contact to ATP. GTP is bound at residue 56 to 59 (DVRN). The RNA-binding stretch occupies residues 266–284 (RSRGKNVQSRHRTLEKRKT).

Belongs to the RapZ-like family. RapZ subfamily. In terms of assembly, homotrimer.

Modulates the synthesis of GlmS, by affecting the processing and stability of the regulatory small RNA GlmZ. When glucosamine-6-phosphate (GlcN6P) concentrations are high in the cell, RapZ binds GlmZ and targets it to cleavage by RNase E. Consequently, GlmZ is inactivated and unable to activate GlmS synthesis. Under low GlcN6P concentrations, RapZ is sequestered and inactivated by an other regulatory small RNA, GlmY, preventing GlmZ degradation and leading to synthesis of GlmS. The protein is RNase adapter protein RapZ of Escherichia fergusonii (strain ATCC 35469 / DSM 13698 / CCUG 18766 / IAM 14443 / JCM 21226 / LMG 7866 / NBRC 102419 / NCTC 12128 / CDC 0568-73).